The following is a 398-amino-acid chain: Enoyl-[acyl-carrier-protein] reductase [NADH] (398 aa).

Residues 48–53 (GSSTGY), 74–75 (FE), 111–112 (DA), and 139–140 (LA) each bind NAD(+). Y225 contributes to the substrate binding site. The active-site Proton donor is the Y235. NAD(+)-binding positions include K244 and 273–275 (VVT).

This sequence belongs to the TER reductase family. Monomer.

It catalyses the reaction a 2,3-saturated acyl-[ACP] + NAD(+) = a (2E)-enoyl-[ACP] + NADH + H(+). It participates in lipid metabolism; fatty acid biosynthesis. Involved in the final reduction of the elongation cycle of fatty acid synthesis (FAS II). Catalyzes the reduction of a carbon-carbon double bond in an enoyl moiety that is covalently linked to an acyl carrier protein (ACP). The sequence is that of Enoyl-[acyl-carrier-protein] reductase [NADH] from Pseudomonas paraeruginosa (strain DSM 24068 / PA7) (Pseudomonas aeruginosa (strain PA7)).